Here is a 99-residue protein sequence, read N- to C-terminus: Aspartyl/glutamyl-tRNA(Asn/Gln) amidotransferase subunit C (99 aa).

Belongs to the GatC family. In terms of assembly, heterotrimer of A, B and C subunits.

The enzyme catalyses L-glutamyl-tRNA(Gln) + L-glutamine + ATP + H2O = L-glutaminyl-tRNA(Gln) + L-glutamate + ADP + phosphate + H(+). It catalyses the reaction L-aspartyl-tRNA(Asn) + L-glutamine + ATP + H2O = L-asparaginyl-tRNA(Asn) + L-glutamate + ADP + phosphate + 2 H(+). Functionally, allows the formation of correctly charged Asn-tRNA(Asn) or Gln-tRNA(Gln) through the transamidation of misacylated Asp-tRNA(Asn) or Glu-tRNA(Gln) in organisms which lack either or both of asparaginyl-tRNA or glutaminyl-tRNA synthetases. The reaction takes place in the presence of glutamine and ATP through an activated phospho-Asp-tRNA(Asn) or phospho-Glu-tRNA(Gln). The sequence is that of Aspartyl/glutamyl-tRNA(Asn/Gln) amidotransferase subunit C from Macrococcus caseolyticus (strain JCSC5402) (Macrococcoides caseolyticum).